The chain runs to 264 residues: 3-methyl-2-oxobutanoate hydroxymethyltransferase (264 aa).

Asp-45 and Asp-84 together coordinate Mg(2+). 3-methyl-2-oxobutanoate contacts are provided by residues 45-46, Asp-84, and Lys-112; that span reads DS. Residue Glu-114 participates in Mg(2+) binding. Glu-181 (proton acceptor) is an active-site residue.

It belongs to the PanB family. In terms of assembly, homodecamer; pentamer of dimers. The cofactor is Mg(2+).

It localises to the cytoplasm. It catalyses the reaction 3-methyl-2-oxobutanoate + (6R)-5,10-methylene-5,6,7,8-tetrahydrofolate + H2O = 2-dehydropantoate + (6S)-5,6,7,8-tetrahydrofolate. It participates in cofactor biosynthesis; (R)-pantothenate biosynthesis; (R)-pantoate from 3-methyl-2-oxobutanoate: step 1/2. In terms of biological role, catalyzes the reversible reaction in which hydroxymethyl group from 5,10-methylenetetrahydrofolate is transferred onto alpha-ketoisovalerate to form ketopantoate. This chain is 3-methyl-2-oxobutanoate hydroxymethyltransferase, found in Escherichia coli (strain 55989 / EAEC).